We begin with the raw amino-acid sequence, 474 residues long: ATP synthase subunit beta (474 aa).

151-158 (GGAGVGKT) contacts ATP.

It belongs to the ATPase alpha/beta chains family. As to quaternary structure, F-type ATPases have 2 components, CF(1) - the catalytic core - and CF(0) - the membrane proton channel. CF(1) has five subunits: alpha(3), beta(3), gamma(1), delta(1), epsilon(1). CF(0) has three main subunits: a(1), b(2) and c(9-12). The alpha and beta chains form an alternating ring which encloses part of the gamma chain. CF(1) is attached to CF(0) by a central stalk formed by the gamma and epsilon chains, while a peripheral stalk is formed by the delta and b chains.

The protein resides in the cell inner membrane. The enzyme catalyses ATP + H2O + 4 H(+)(in) = ADP + phosphate + 5 H(+)(out). Produces ATP from ADP in the presence of a proton gradient across the membrane. The catalytic sites are hosted primarily by the beta subunits. This Paracoccus denitrificans (strain Pd 1222) protein is ATP synthase subunit beta.